A 114-amino-acid polypeptide reads, in one-letter code: U17-barytoxin-Tl1a (114 aa).

The N-terminal stretch at 1–20 is a signal peptide; that stretch reads MKTIIVFLSLLVLATKFGDA. The propeptide occupies 21 to 74; that stretch reads NEGVNQEQMKEVIQNEFREDFLNEMAPMSLLQQLEAIESTLLEKEADRNSRQKR. 3 cysteine pairs are disulfide-bonded: Cys75–Cys88, Cys82–Cys93, and Cys87–Cys108.

It belongs to the neurotoxin 14 (magi-1) family. 03 (ICK-30-40) subfamily. As to expression, expressed by the venom gland.

The protein resides in the secreted. Functionally, ion channel inhibitor. The polypeptide is U17-barytoxin-Tl1a (Trittame loki (Brush-footed trapdoor spider)).